A 280-amino-acid chain; its full sequence is Large ribosomal subunit protein uL2 (280 aa).

Disordered stretches follow at residues 1 to 25 (MGIRKYRPMTPGTRQRSGADFAEVT) and 230 to 280 (HPHG…SGRG). Residues 257–280 (KTRKRRKPSSKFIIRRRKTASGRG) are compositionally biased toward basic residues.

It belongs to the universal ribosomal protein uL2 family. Part of the 50S ribosomal subunit. Forms a bridge to the 30S subunit in the 70S ribosome.

In terms of biological role, one of the primary rRNA binding proteins. Required for association of the 30S and 50S subunits to form the 70S ribosome, for tRNA binding and peptide bond formation. It has been suggested to have peptidyltransferase activity; this is somewhat controversial. Makes several contacts with the 16S rRNA in the 70S ribosome. The polypeptide is Large ribosomal subunit protein uL2 (Gloeobacter violaceus (strain ATCC 29082 / PCC 7421)).